A 219-amino-acid chain; its full sequence is Ribose-5-phosphate isomerase A (219 aa).

Substrate is bound by residues 28 to 31, 81 to 84, and 94 to 97; these read SGST, DGAD, and KGGG. The active-site Proton acceptor is the glutamate 103. A substrate-binding site is contributed by lysine 121.

The protein belongs to the ribose 5-phosphate isomerase family. In terms of assembly, homodimer.

It catalyses the reaction aldehydo-D-ribose 5-phosphate = D-ribulose 5-phosphate. It functions in the pathway carbohydrate degradation; pentose phosphate pathway; D-ribose 5-phosphate from D-ribulose 5-phosphate (non-oxidative stage): step 1/1. Functionally, catalyzes the reversible conversion of ribose-5-phosphate to ribulose 5-phosphate. This chain is Ribose-5-phosphate isomerase A, found in Haemophilus ducreyi (strain 35000HP / ATCC 700724).